The primary structure comprises 505 residues: Peroxisome proliferator-activated receptor gamma (505 aa).

A glycan (O-linked (GlcNAc) threonine) is linked at T84. S112 is modified (phosphoserine; by MAPK). Positions 136 to 210 (AIECRVCGDK…VGMSHNAIRF (75 aa)) form a DNA-binding region, nuclear receptor. 2 consecutive NR C4-type zinc fingers follow at residues 139 to 159 (CRVCGDKASGFHYGVHACEGC) and 176 to 198 (CDLNCRIHKKSRNKCQYCRFQKC). Positions 205-280 (HNAIRFGRMP…DKSPFVIYDM (76 aa)) are interaction with FAM120B. Positions 238–503 (DLRALAKHLY…HPLLQEIYKD (266 aa)) constitute an NR LBD domain. K252 is covalently cross-linked (Glycyl lysine isopeptide (Lys-Gly) (interchain with G-Cter in ubiquitin)). The short motif at 495–503 (PLLQEIYKD) is the 9aaTAD element.

It belongs to the nuclear hormone receptor family. NR1 subfamily. In terms of assembly, interacts with FOXO1 (acetylated form). Heterodimer with other nuclear receptors, such as RXRA. The heterodimer with the retinoic acid receptor RXRA is called adipocyte-specific transcription factor ARF6. Interacts with NCOA6 coactivator, leading to a strong increase in transcription of target genes. Interacts with coactivator PPARBP, leading to a mild increase in transcription of target genes. Interacts with NOCA7 in a ligand-inducible manner. Interacts with NCOA1 and NCOA2 LXXLL motifs. Interacts with ASXL1, ASXL2, DNTTIP2, FAM120B, MAP2K1/MEK1, NR0B2, PDPK1, PRDM16, PRMT2 and TGFB1I1. Interacts (when activated by agonist) with PPP5C. Interacts with HELZ2 and THRAP3; the interaction stimulates the transcriptional activity of PPARG. Interacts with PER2, the interaction is ligand dependent and blocks PPARG recruitment to target promoters. Interacts with NOCT. Interacts with ACTN4. Interacts (when in the liganded conformation) with GPS2. Interacts with CRY1 and CRY2 in a ligand-dependent manner. In the absence of hormonal ligand, interacts with TACC1. In macrophages, interacts with PAQR3 and STUB1; the interactions promote PPARG poylubiquitination and STUB1-mediated degradation. Post-translationally, phosphorylated by MAPK. The phosphorylation inhibits PPAR gamma activity. In terms of processing, O-GlcNAcylation at Thr-84 reduces transcriptional activity in adipocytes. Phosphorylated at basal conditions and dephosphorylated when treated with the ligand. May be dephosphorylated by PPP5C. The phosphorylated form may be inactive and dephosphorylation at induces adipogenic activity. Post-translationally, ubiquitinated by E3 ubiquitin-protein ligase complex containing FBXO9; leading to proteasomal degradation. Ubiquitinated at Lys-252 by TRIM55 leading to proteasomal degradation. Ubiquitinated by E3 ubiquitin-protein ligase STUB1/CHIP; leading to proteasomal degradation. As to expression, highest expression in adipose tissue.

The protein resides in the nucleus. Its subcellular location is the cytoplasm. PDPK1 activates its transcriptional activity independently of its kinase activity. Nuclear receptor that binds peroxisome proliferators such as hypolipidemic drugs and fatty acids. Once activated by a ligand, the nuclear receptor binds to DNA specific PPAR response elements (PPRE) and modulates the transcription of its target genes, such as acyl-CoA oxidase. It therefore controls the peroxisomal beta-oxidation pathway of fatty acids. Key regulator of adipocyte differentiation and glucose homeostasis. ARF6 acts as a key regulator of the tissue-specific adipocyte P2 (aP2) enhancer. Acts as a critical regulator of gut homeostasis by suppressing NF-kappa-B-mediated pro-inflammatory responses. Plays a role in the regulation of cardiovascular circadian rhythms by regulating the transcription of BMAL1 in the blood vessels. The polypeptide is Peroxisome proliferator-activated receptor gamma (Pparg) (Rattus norvegicus (Rat)).